The chain runs to 1089 residues: MGTSHQVFLVLSCLLTGPGLISCQLLLPSILPNENEKIVQLNSSFSLRCVGESEVSWQHPMSEEDDPNVEIRSEENNSGLFVTVLEVVNASAAHTGWYTCYYNHTQTDESEIEGRHIYIYVPDPDMAFVPLGMTDSLVIVEEDDSAIIPCRTTDPETQVTLHNNGRLVPASYDSRQGFNGTFSVGPYICEATVKGRTFKTSEFNVYALKATSELNLEMDARQTVYKAGETIVVTCAVFNNEVVDLQWTYPGEVRNKGITMLEEIKLPSIKLVYTLTVPKATVKDSGEYECAARQATKEVKEMKRVTISVHEKGFVEIEPTFGQLEAVNLHEVREFVVEVQAYPTPRISWLKDNLTLIENLTEITTDVQKSQETRYQSKLKLIRAKEEDSGHYTIIVQNEDDVKSYTFELSTLVPASILDLVDDHHGSGGGQTVRCTAEGTPLPEIDWMICKHIKKCNNDTSWTVLASNVSNIITELPRRGRSTVEGRVSFAKVEETIAVRCLAKNNLSVVARELKLVAPTLRSELTVAAAVLVLLVIVIVSLIVLVVIWKQKPRYEIRWRVIESISPDGHEYIYVDPMQLPYDSRWEFPRDGLVLGRILGSGAFGKVVEGTAYGLSRSQPVMKVAVKMLKPTARSSEKQALMSELKIMTHLGPHLNIVNLLGACTKSGPIYIITEYCFYGDLVNYLHKNRDSFMSQHPEKPKKDLDIFGLNPADESTRSYVILSFENNGDYMDMKQADTTQYVPMLERKEVSKYSDIQRSLYDRPASYKKKSMLDSEVKNLLSDDDSEGLTLLDLLSFTYQVARGMEFLASKNCVHRDLAARNVLLAQGKIVKICDFGLARDIMHDSNYVSKGSTFLPVKWMAPESIFDNLYTTLSDVWSYGILLWEIFSLGGTPYPGMMVDSTFYNKIKSGYRMAKPDHATSEVYEIMVQCWNSEPEKRPSFYHLSEIVENLLPGQYKKSYEKIHLDFLKSDHPAVARMRVDSDNAYIGVTYKNEEDKLKDWEGGLDEQRLSADSGYIIPLPDIDPVPEEEDLGKRNRHSSQTSEESAIETGSSSSTFIKREDETIEDIDMMDDIGIDSSDLVEDSFL.

Residues 1 to 24 (MGTSHQVFLVLSCLLTGPGLISCQ) form the signal peptide. Ig-like C2-type domains lie at 25 to 113 (LLLP…SEIE), 117 to 201 (IYIY…FKTS), 202 to 306 (EFNV…KRVT), 319 to 410 (PTFG…FELS), and 414 to 517 (PASI…LKLV). The Extracellular portion of the chain corresponds to 25–528 (LLLPSILPNE…PTLRSELTVA (504 aa)). N-linked (GlcNAc...) asparagine glycans are attached at residues N42, N76, N89, N103, and N179. C49 and C100 are joined by a disulfide. Disulfide bonds link C150–C189 and C235–C290. N353, N359, N458, N468, and N506 each carry an N-linked (GlcNAc...) asparagine glycan. A disulfide bridge connects residues C435 and C501. Residues 529–549 (AAVLVLLVIVIVSLIVLVVIW) form a helical membrane-spanning segment. The Cytoplasmic segment spans residues 550 to 1089 (KQKPRYEIRW…SSDLVEDSFL (540 aa)). A phosphotyrosine; by autocatalysis mark is found at Y572 and Y574. Residues 593–954 (LVLGRILGSG…HLSEIVENLL (362 aa)) enclose the Protein kinase domain. ATP is bound by residues 599–607 (LGSGAFGKV) and K627. 6 positions are modified to phosphotyrosine; by autocatalysis: Y720, Y731, Y742, Y754, Y762, and Y768. D818 serves as the catalytic Proton acceptor. 3 positions are modified to phosphotyrosine; by autocatalysis: Y849, Y988, and Y1018. The tract at residues 1018–1089 (YIIPLPDIDP…SSDLVEDSFL (72 aa)) is disordered. The span at 1041-1059 (SSQTSEESAIETGSSSSTF) shows a compositional bias: polar residues. Over residues 1065-1089 (ETIEDIDMMDDIGIDSSDLVEDSFL) the composition is skewed to acidic residues.

Belongs to the protein kinase superfamily. Tyr protein kinase family. CSF-1/PDGF receptor subfamily. As to quaternary structure, interacts with homodimeric PDGFA, PDGFB and PDGFC, and with heterodimers formed by PDGFA and PDGFB. Monomer in the absence of bound ligand. Interaction with dimeric PDGFA, PDGFB and/or PDGFC leads to receptor dimerization, where both PDGFRA homodimers and heterodimers with PDGFRB are observed. Interacts (tyrosine phosphorylated) with SHB (via SH2 domain). Interacts (tyrosine phosphorylated) with SHF (via SH2 domain). Interacts (tyrosine phosphorylated) with SRC (via SH2 domain). Interacts (tyrosine phosphorylated) with PIK3R1. Interacts (tyrosine phosphorylated) with PLCG1 (via SH2 domain). Interacts (tyrosine phosphorylated) with CRK, GRB2 and GRB7. Interacts with CD248; this interaction promotes PDGF receptor signaling pathway. Ubiquitinated, leading to its internalization and degradation. Post-translationally, autophosphorylated on tyrosine residues upon ligand binding. Autophosphorylation occurs in trans, i.e. one subunit of the dimeric receptor phosphorylates tyrosine residues on the other subunit. Phosphorylation at Tyr-731 and Tyr-742 is important for interaction with PIK3R1. Phosphorylation at Tyr-720 and Tyr-754 is important for interaction with PTPN11. Phosphorylation at Tyr-762 is important for interaction with CRK. Phosphorylation at Tyr-572 and Tyr-574 is important for interaction with SRC and SRC family members. Phosphorylation at Tyr-988 and Tyr-1018 is important for interaction with PLCG1. In terms of tissue distribution, focally expressed in cortical interstitial cells and highly expressed in the interstitium of the papillary region. Also expressed by adventitial cells in arterial vessels. Up-regulated in areas of renal fibrosis. In mice with unilateral ureteral obstruction, expression in cortical interstitial cells becomes prominent at day 4 which increases progressively until day 14.

It is found in the cell membrane. The protein localises to the cell projection. The protein resides in the cilium. Its subcellular location is the golgi apparatus. The enzyme catalyses L-tyrosyl-[protein] + ATP = O-phospho-L-tyrosyl-[protein] + ADP + H(+). With respect to regulation, present in an inactive conformation in the absence of bound ligand. Binding of PDGFA and/or PDGFB leads to dimerization and activation by autophosphorylation on tyrosine residues. Inhibited by imatinib, nilotinib and sorafenib. Its function is as follows. Tyrosine-protein kinase that acts as a cell-surface receptor for PDGFA, PDGFB and PDGFC and plays an essential role in the regulation of embryonic development, cell proliferation, survival and chemotaxis. Depending on the context, promotes or inhibits cell proliferation and cell migration. Plays an important role in the differentiation of bone marrow-derived mesenchymal stem cells. Required for normal skeleton development and cephalic closure during embryonic development. Required for normal development of the mucosa lining the gastrointestinal tract, and for recruitment of mesenchymal cells and normal development of intestinal villi. Plays a role in cell migration and chemotaxis in wound healing. Plays a role in platelet activation, secretion of agonists from platelet granules, and in thrombin-induced platelet aggregation. Binding of its cognate ligands - homodimeric PDGFA, homodimeric PDGFB, heterodimers formed by PDGFA and PDGFB or homodimeric PDGFC -leads to the activation of several signaling cascades; the response depends on the nature of the bound ligand and is modulated by the formation of heterodimers between PDGFRA and PDGFRB. Phosphorylates PIK3R1, PLCG1, and PTPN11. Activation of PLCG1 leads to the production of the cellular signaling molecules diacylglycerol and inositol 1,4,5-trisphosphate, mobilization of cytosolic Ca(2+) and the activation of protein kinase C. Phosphorylates PIK3R1, the regulatory subunit of phosphatidylinositol 3-kinase, and thereby mediates activation of the AKT1 signaling pathway. Mediates activation of HRAS and of the MAP kinases MAPK1/ERK2 and/or MAPK3/ERK1. Promotes activation of STAT family members STAT1, STAT3 and STAT5A and/or STAT5B. Receptor signaling is down-regulated by protein phosphatases that dephosphorylate the receptor and its down-stream effectors, and by rapid internalization of the activated receptor. The protein is Platelet-derived growth factor receptor alpha (Pdgfra) of Mus musculus (Mouse).